The sequence spans 770 residues: ARF GTPase-activating protein GIT1 (770 aa).

Positions 1–124 (MSRKGPRAEV…AFVHKLPCRD (124 aa)) constitute an Arf-GAP domain. An interaction with gamma-tubulin and localization to the centrosome region spans residues 1–124 (MSRKGPRAEV…AFVHKLPCRD (124 aa)). A C4-type zinc finger spans residues 11–34 (CADCSAPDPGWASISRGVLVCDEC). ANK repeat units lie at residues 132–161 (DLSKQLHSSVRTGNLETCLRLLSLGAQANF), 166–195 (KGTTPLHVAAKAGQTLQAELLVVYGADPGS), and 199–228 (NGRTPIDYARQAGHHELAERLVECQYELTD). Phosphotyrosine is present on Tyr224. The interval 245-374 (HYIIPQMADR…QGKSLSSPTD (130 aa)) is interaction with PCLO. The interval 253–424 (DRSRQKCMSQ…NRARSMDSSD (172 aa)) is interaction with PTK2/FAK1. The segment at 254 to 376 (RSRQKCMSQS…KSLSSPTDNL (123 aa)) is interaction with ARHGEF7. Residues 363–425 (RQQGKSLSSP…RARSMDSSDL (63 aa)) are disordered. Residues 366-383 (GKSLSSPTDNLELSARNQ) show a composition bias toward polar residues. Phosphoserine is present on residues Ser368 and Ser371. Thr373 carries the post-translational modification Phosphothreonine. An interaction with NCK2 and GRIN3A region spans residues 375–596 (NLELSARNQS…QEGSRHASKL (222 aa)). Positions 375-596 (NLELSARNQS…QEGSRHASKL (222 aa)) are required for localization at synapses. Residues Ser379 and Ser384 each carry the phosphoserine modification. Tyr392 carries the post-translational modification Phosphotyrosine. Residues Ser394 and Ser397 each carry the phosphoserine modification. Acidic residues predominate over residues 394–403 (SVASDEDTDQ). Thr401 is modified (phosphothreonine). Phosphoserine is present on residues Ser419, Ser422, and Ser426. Residues 420-475 (MDSSDLSDGAVTLQEYLELKKALATSEAKVQQLMKVNSSLSDELRKLQREIHKLQA) are interaction with MAPK1. Residues 429–629 (AVTLQEYLEL…EGKRFLELSK (201 aa)) form an interaction with IKBKG region. Positions 449-483 (VQQLMKVNSSLSDELRKLQREIHKLQAENLQLRQP) form a coiled coil. Phosphoserine is present on residues Ser507 and Ser545. Thr546 is modified (phosphothreonine). Residues Tyr554 and Tyr563 each carry the phosphotyrosine modification. Ser570, Ser580, Ser601, and Ser605 each carry phosphoserine. Over residues 574 to 586 (VTFTPSSPLLSSS) the composition is skewed to low complexity. The interval 574 to 615 (VTFTPSSPLLSSSQEGSRHASKLSRHGSGAESDYENTQSGEP) is disordered. Thr610 bears the Phosphothreonine mark. Ser639 carries the phosphoserine modification. The interaction with PXN and TGFB1I1 stretch occupies residues 646 to 770 (PGLPSTEDVI…VTITTREKKQ (125 aa)).

In terms of assembly, forms homodimers and possibly oligomers. May form heterooligomers with GIT2. Interacts with G protein-coupled receptor kinases, including GRK2, GRK3, GRK5 and GRK6. Interacts with PPFIA1, PPFIA2 and PPFIA4. Interacts with GRIP1 and forms a ternary complex with PPFIA1 and GRIP1. Directly interacts with ARHGEF7/beta-PIX, forming in vitro a heptameric complex made of a GIT1 dimer and an ARHGEF7 trimer. Directly interacts with PXN/paxillin; this interaction is enhanced in the presence of ARHGEF7. Directly interacts (via C-terminus) with TGFB1I1/Hic-5 (via LD motif 3). Directly interacts with PTK2/FAK1. May interact with PTK2B/PYK2; this interaction may be indirect. Interacts with AMPA receptors GRIA2/3. Directly interacts with protein Piccolo/PCLO. Forms a complex with Ephrin-B1/EFNB1 and NCK2/GRB4 (via SH2); this interaction is important for spine morphogenesis and synapse formation. Interaction with NCK2 is transient and depends upon GIT1 phosphorylation at Tyr-392. Interacts with GRIN3A/GluN3A (via C-terminus); this interaction competes with GIT1 interaction with ARHGEF7 and limits synaptic localization of GIT1. Interacts with IKBKG/NEMO in resting bone mesenchymal stem cells, as well as in TNF-stimulated cells; this interaction may increase IKBKG affinity for 'Lys-63'-linked polyubiquitin chains. Interacts with GABA(A) receptors, including GABRB3 and GABRG2. Interacts with SCRIB. Interacts (via N- and C-terminus) with ENTR1/SDCCAG3 (via N-terminus); this interaction is direct. May form a tripartite complex with ENTR1 and PTPN13. Interacts with YWHAZ. Interacts with PAK1 and PAK3. Directly interacts (via N-terminus) with gamma-tubulin. Interacts with MAPK1 and MAPK3; this interaction is required for MAPK1/3 recruitment to focal adhesions. Phosphorylated on tyrosine residues by PTK2/FAK1 and SRC in growing fibroblasts. Phosphorylation at Tyr-392 is induced by activation of Ephrin-B1/EFNB1 and catalyzed by SRC family kinases. It is required for the interaction with NCK2 and for GIT1 recruitment to synapses in hippocampal neurons. As to expression, widely expressed. Expressed at high levels in testis (at protein level). Expressed in the brain, including in CA1 hippocampal neurons, in the amygdala, and thalamic nuclei (at protein level).

Its subcellular location is the cytoplasm. The protein resides in the synapse. The protein localises to the presynapse. It localises to the postsynapse. It is found in the postsynaptic density. Its subcellular location is the cell junction. The protein resides in the focal adhesion. The protein localises to the cell projection. It localises to the lamellipodium. It is found in the cytoskeleton. Its subcellular location is the microtubule organizing center. The protein resides in the centrosome. The protein localises to the spindle pole. Functionally, GTPase-activating protein for ADP ribosylation factor family members, including ARF1. Multidomain scaffold protein that interacts with numerous proteins and therefore participates in many cellular functions, including receptor internalization, focal adhesion remodeling, and signaling by both G protein-coupled receptors and tyrosine kinase receptors. Through PAK1 activation, positively regulates microtubule nucleation during interphase. Plays a role in the regulation of cytokinesis; for this function, may act in a pathway also involving ENTR1 and PTPN13. May promote cell motility both by regulating focal complex dynamics and by the activation of RAC1. May act as scaffold for MAPK1/3 signal transduction, recruiting MAPK1/3 to focal adhesions after EGF stimulation via a Src-dependent pathway, hence stimulating cell migration. Plays a role in brain development and function. Involved in the regulation of spine density and synaptic plasticity that is required for processes involved in learning. Plays an important role in dendritic spine morphogenesis and synapse formation. In hippocampal neurons, recruits guanine nucleotide exchange factors (GEFs), such as ARHGEF7/beta-PIX, to the synaptic membrane. These in turn locally activate RAC1, which is an essential step for spine morphogenesis and synapse formation. May contribute to the organization of presynaptic active zones through oligomerization and formation of a Piccolo/PCLO-based protein network, which includes ARHGEF7/beta-PIX and FAK1. In neurons, through its interaction with liprin-alpha family members, may be required for AMPA receptor (GRIA2/3) proper targeting to the cell membrane. In complex with GABA(A) receptors and ARHGEF7, plays a crucial role in regulating GABA(A) receptor synaptic stability, maintaining GPHN/gephyrin scaffolds and hence GABAergic inhibitory synaptic transmission, by locally coordinating RAC1 and PAK1 downstream effector activity, leading to F-actin stabilization. May also be important for RAC1 downstream signaling pathway through PAK3 and regulation of neuronal inhibitory transmission at presynaptic input. Required for successful bone regeneration during fracture healing. The function in intramembranous ossification may, at least partly, exerted by macrophages in which GIT1 is a key negative regulator of redox homeostasis, IL1B production, and glycolysis, acting through the ERK1/2/NRF2/NFE2L2 axis. May also play a role in angiogenesis during fracture healing. In this process, may regulate activation of the canonical NF-kappa-B signal in bone mesenchymal stem cells by enhancing the interaction between NEMO and 'Lys-63'-ubiquitinated RIPK1/RIP1, eventually leading to enhanced production of VEGFA and others angiogenic factors. Essential for VEGF signaling through the activation of phospholipase C-gamma and ERK1/2, hence may control endothelial cell proliferation and angiogenesis. The protein is ARF GTPase-activating protein GIT1 of Rattus norvegicus (Rat).